The following is a 41-amino-acid chain: Large ribosomal subunit protein bL36 (41 aa).

It belongs to the bacterial ribosomal protein bL36 family.

This chain is Large ribosomal subunit protein bL36, found in Nitrobacter winogradskyi (strain ATCC 25391 / DSM 10237 / CIP 104748 / NCIMB 11846 / Nb-255).